Reading from the N-terminus, the 437-residue chain is tRNA-2-methylthio-N(6)-dimethylallyladenosine synthase (437 aa).

The region spanning 1–115 (MKVYIETMGC…ISQVIHKEKA (115 aa)) is the MTTase N-terminal domain. [4Fe-4S] cluster contacts are provided by cysteine 10, cysteine 46, cysteine 78, cysteine 148, cysteine 152, and cysteine 155. A Radical SAM core domain is found at 134–367 (KKAQIRSLLN…QNRHKEILEE (234 aa)). In terms of domain architecture, TRAM spans 370 to 436 (KLEVGKTHVV…KGRLMATTKG (67 aa)).

It belongs to the methylthiotransferase family. MiaB subfamily. As to quaternary structure, monomer. [4Fe-4S] cluster is required as a cofactor.

The protein resides in the cytoplasm. It catalyses the reaction N(6)-dimethylallyladenosine(37) in tRNA + (sulfur carrier)-SH + AH2 + 2 S-adenosyl-L-methionine = 2-methylsulfanyl-N(6)-dimethylallyladenosine(37) in tRNA + (sulfur carrier)-H + 5'-deoxyadenosine + L-methionine + A + S-adenosyl-L-homocysteine + 2 H(+). Its function is as follows. Catalyzes the methylthiolation of N6-(dimethylallyl)adenosine (i(6)A), leading to the formation of 2-methylthio-N6-(dimethylallyl)adenosine (ms(2)i(6)A) at position 37 in tRNAs that read codons beginning with uridine. This chain is tRNA-2-methylthio-N(6)-dimethylallyladenosine synthase, found in Helicobacter pylori (strain G27).